The chain runs to 459 residues: Zinc finger and BTB domain-containing protein 9 (459 aa).

The BTB domain occupies 48-112 (CDVSLLVQGR…IYSGSLHLPL (65 aa)). Residues 178–189 (VRSSASTENSVL) show a composition bias toward polar residues. Disordered stretches follow at residues 178–200 (VRSS…EGSE) and 212–274 (EEEE…ASQI). Glycyl lysine isopeptide (Lys-Gly) (interchain with G-Cter in SUMO2) cross-links involve residues lysine 285, lysine 293, and lysine 368. The tract at residues 293–356 (KEKTKVLSGE…GGTGQAMHGP (64 aa)) is disordered. Residues 397-419 (FGCGICNKRFKLKHHLTEHMKTH) form a C2H2-type 1 zinc finger. A C2H2-type 2; atypical zinc finger spans residues 424–446 (HACPHCGRRFRVQAFFLRHRDLC).

The protein localises to the nucleus. In terms of biological role, may be involved in transcriptional regulation. The sequence is that of Zinc finger and BTB domain-containing protein 9 (Zbtb9) from Mus musculus (Mouse).